The following is a 578-amino-acid chain: Membrane protein insertase YidC (578 aa).

A helical membrane pass occupies residues 3–23 (IQRSILIVALAVVSYLLVLQW). Positions 34 to 72 (AASASMNTTQGLPDTPSASGTSSDVPTAQSSAAGSEAAD) are disordered. Polar residues predominate over residues 37–66 (ASMNTTQGLPDTPSASGTSSDVPTAQSSAA). The next 5 helical transmembrane spans lie at 361–381 (LELTVDYGFLWFIAQPIFWLL), 387–407 (LIGNWGWSIIALTVLIKLAFF), 457–477 (LGGCLPILVQMPVFLSLYWVL), 500–520 (PFFILPIVMGGTMLIQQMLNP), and 535–555 (PIIFTFFFLWFPAGLVLYWVV).

The protein belongs to the OXA1/ALB3/YidC family. Type 1 subfamily. As to quaternary structure, interacts with the Sec translocase complex via SecD. Specifically interacts with transmembrane segments of nascent integral membrane proteins during membrane integration.

The protein resides in the cell inner membrane. Its function is as follows. Required for the insertion and/or proper folding and/or complex formation of integral membrane proteins into the membrane. Involved in integration of membrane proteins that insert both dependently and independently of the Sec translocase complex, as well as at least some lipoproteins. Aids folding of multispanning membrane proteins. This chain is Membrane protein insertase YidC, found in Pseudomonas aeruginosa (strain ATCC 15692 / DSM 22644 / CIP 104116 / JCM 14847 / LMG 12228 / 1C / PRS 101 / PAO1).